A 135-amino-acid polypeptide reads, in one-letter code: Interleukin-4 (135 aa).

Positions 1-24 are cleaved as a signal peptide; the sequence is MGLTSQLIPALVCLLVCTSHFVHG. 2 cysteine pairs are disulfide-bonded: cysteine 48–cysteine 85 and cysteine 70–cysteine 105. Asparagine 62 and asparagine 96 each carry an N-linked (GlcNAc...) asparagine glycan.

Belongs to the IL-4/IL-13 family.

Its subcellular location is the secreted. Its function is as follows. Participates in at least several B-cell activation processes as well as of other cell types. It is a costimulator of DNA-synthesis. It induces the expression of class II MHC molecules on resting B-cells. It enhances both secretion and cell surface expression of IgE and IgG1. It also regulates the expression of the low affinity Fc receptor for IgE (CD23) on both lymphocytes and monocytes. Positively regulates IL31RA expression in macrophages. Stimulates autophagy in dendritic cells by interfering with mTORC1 signaling and through the induction of RUFY4. The chain is Interleukin-4 (IL4) from Ovis aries (Sheep).